A 275-amino-acid chain; its full sequence is Release factor glutamine methyltransferase (275 aa).

S-adenosyl-L-methionine is bound by residues 114 to 118 (GTGSG), Asp137, Trp165, and Asn180. Residue 180 to 183 (NPPY) participates in substrate binding.

This sequence belongs to the protein N5-glutamine methyltransferase family. PrmC subfamily.

The catalysed reaction is L-glutaminyl-[peptide chain release factor] + S-adenosyl-L-methionine = N(5)-methyl-L-glutaminyl-[peptide chain release factor] + S-adenosyl-L-homocysteine + H(+). Methylates the class 1 translation termination release factors RF1/PrfA and RF2/PrfB on the glutamine residue of the universally conserved GGQ motif. In Xylella fastidiosa (strain 9a5c), this protein is Release factor glutamine methyltransferase.